We begin with the raw amino-acid sequence, 240 residues long: Phosphoribosylaminoimidazole-succinocarboxamide synthase (240 aa).

The protein belongs to the SAICAR synthetase family.

The catalysed reaction is 5-amino-1-(5-phospho-D-ribosyl)imidazole-4-carboxylate + L-aspartate + ATP = (2S)-2-[5-amino-1-(5-phospho-beta-D-ribosyl)imidazole-4-carboxamido]succinate + ADP + phosphate + 2 H(+). It participates in purine metabolism; IMP biosynthesis via de novo pathway; 5-amino-1-(5-phospho-D-ribosyl)imidazole-4-carboxamide from 5-amino-1-(5-phospho-D-ribosyl)imidazole-4-carboxylate: step 1/2. The chain is Phosphoribosylaminoimidazole-succinocarboxamide synthase from Pyrobaculum calidifontis (strain DSM 21063 / JCM 11548 / VA1).